Reading from the N-terminus, the 431-residue chain is UDP-N-acetylglucosamine 1-carboxyvinyltransferase (431 aa).

24 to 25 (KN) contacts phosphoenolpyruvate. Arg-95 provides a ligand contact to UDP-N-acetyl-alpha-D-glucosamine. Catalysis depends on Asp-119, which acts as the Proton donor. The UDP-N-acetyl-alpha-D-glucosamine site is built by Asp-314 and Met-336.

It belongs to the EPSP synthase family. MurA subfamily.

Its subcellular location is the cytoplasm. The enzyme catalyses phosphoenolpyruvate + UDP-N-acetyl-alpha-D-glucosamine = UDP-N-acetyl-3-O-(1-carboxyvinyl)-alpha-D-glucosamine + phosphate. It functions in the pathway cell wall biogenesis; peptidoglycan biosynthesis. Functionally, cell wall formation. Adds enolpyruvyl to UDP-N-acetylglucosamine. This Bradyrhizobium diazoefficiens (strain JCM 10833 / BCRC 13528 / IAM 13628 / NBRC 14792 / USDA 110) protein is UDP-N-acetylglucosamine 1-carboxyvinyltransferase.